A 265-amino-acid polypeptide reads, in one-letter code: Cell adhesion molecule CEACAM7 (265 aa).

The signal sequence occupies residues 1 to 35 (MGSPSACPYRVCIPWQGLLLTASLLTFWNLPNSAQ). The Ig-like V-type domain maps to 36-142 (TNIDVVPFNV…EEVTRQFYVF (107 aa)). Residues asparagine 57, asparagine 85, asparagine 105, asparagine 112, asparagine 174, asparagine 183, and asparagine 198 are each glycosylated (N-linked (GlcNAc...) asparagine). An Ig-like C2-type domain is found at 146–233 (PKPSITSNNF…ASRSDPVTLN (88 aa)). An intrachain disulfide couples cysteine 168 to cysteine 216. Serine 242 carries the GPI-anchor amidated serine lipid modification. The propeptide at 243–265 (SPDLSAGTAVSIMIGVLAGMALI) is removed in mature form.

It belongs to the immunoglobulin superfamily. CEA family. In terms of assembly, homodimer. In terms of tissue distribution, expressed in columnar epithelial cells of the colon (at protein level). Strongly down-regulated in colonic adenocarcinomas.

It localises to the cell membrane. The protein localises to the apical cell membrane. This is Cell adhesion molecule CEACAM7 from Homo sapiens (Human).